A 125-amino-acid chain; its full sequence is Large ribosomal subunit protein bL12 (125 aa).

It belongs to the bacterial ribosomal protein bL12 family. As to quaternary structure, homodimer. Part of the ribosomal stalk of the 50S ribosomal subunit. Forms a multimeric L10(L12)X complex, where L10 forms an elongated spine to which 2 to 4 L12 dimers bind in a sequential fashion. Binds GTP-bound translation factors.

Its function is as follows. Forms part of the ribosomal stalk which helps the ribosome interact with GTP-bound translation factors. Is thus essential for accurate translation. This Campylobacter jejuni subsp. jejuni serotype O:6 (strain 81116 / NCTC 11828) protein is Large ribosomal subunit protein bL12.